The primary structure comprises 139 residues: Phosphoribosyl-AMP cyclohydrolase (139 aa).

Mg(2+) is bound at residue Asp-91. Cys-92 lines the Zn(2+) pocket. 2 residues coordinate Mg(2+): Asp-93 and Asp-95. 2 residues coordinate Zn(2+): Cys-110 and Cys-117.

It belongs to the PRA-CH family. As to quaternary structure, homodimer. It depends on Mg(2+) as a cofactor. Requires Zn(2+) as cofactor.

The protein localises to the cytoplasm. It catalyses the reaction 1-(5-phospho-beta-D-ribosyl)-5'-AMP + H2O = 1-(5-phospho-beta-D-ribosyl)-5-[(5-phospho-beta-D-ribosylamino)methylideneamino]imidazole-4-carboxamide. It participates in amino-acid biosynthesis; L-histidine biosynthesis; L-histidine from 5-phospho-alpha-D-ribose 1-diphosphate: step 3/9. Catalyzes the hydrolysis of the adenine ring of phosphoribosyl-AMP. The protein is Phosphoribosyl-AMP cyclohydrolase of Brucella abortus (strain S19).